The following is a 125-amino-acid chain: Acidic phospholipase A2 HTe (125 aa).

7 cysteine pairs are disulfide-bonded: cysteine 11-cysteine 77, cysteine 27-cysteine 124, cysteine 29-cysteine 45, cysteine 44-cysteine 105, cysteine 51-cysteine 98, cysteine 61-cysteine 91, and cysteine 84-cysteine 96. Ca(2+) contacts are provided by tyrosine 28, glycine 30, and glycine 32. Histidine 48 is a catalytic residue. Aspartate 49 is a binding site for Ca(2+). Aspartate 99 is an active-site residue.

Belongs to the phospholipase A2 family. Group I subfamily. D49 sub-subfamily. Ca(2+) is required as a cofactor. No glycosylation was detected on this protein. Expressed by the venom gland.

It is found in the secreted. It catalyses the reaction a 1,2-diacyl-sn-glycero-3-phosphocholine + H2O = a 1-acyl-sn-glycero-3-phosphocholine + a fatty acid + H(+). Functionally, snake venom phospholipase A2 (PLA2) that blocks neuromuscular transmission, but that does not produce blockade by virtue of a selective action on nerve endings. Instead, the toxin acts both on nerve and on muscle. PLA2 catalyzes the calcium-dependent hydrolysis of the 2-acyl groups in 3-sn-phosphoglycerides. This chain is Acidic phospholipase A2 HTe, found in Notechis scutatus scutatus (Mainland tiger snake).